A 352-amino-acid polypeptide reads, in one-letter code: Rhodopsin, deep-sea form (352 aa).

At 1–36 (MNGTEGPNFYIPMSNITGVVRSPFEYPQYYLAEPWA) the chain is on the extracellular side. Residues Asn-2 and Asn-15 are each glycosylated (N-linked (GlcNAc...) asparagine). A helical membrane pass occupies residues 37-61 (YTILAAYMFTLILLGFPVNFLTLYV). Over 62 to 73 (TIEHKKLRTPLN) the chain is Cytoplasmic. A helical transmembrane segment spans residues 74 to 98 (YILLNLAVANLFMVFGGFTTTVYTS). Over 99 to 113 (MHGYFVFGETGCNLE) the chain is Extracellular. Cys-110 and Cys-187 are disulfide-bonded. Residues 114-133 (GYFATLGGEISLWSLVVLAI) traverse the membrane as a helical segment. At 134–152 (ERWVVVCKPMSNFRFGENH) the chain is on the cytoplasmic side. The helical transmembrane segment at 153–176 (AIMGLAFTWIMANSCAMPPLFGWS) threads the bilayer. The Extracellular segment spans residues 177–202 (RYIPEGMQCSCGVDYYTLKPEVNNES). A glycan (N-linked (GlcNAc...) asparagine) is linked at Asn-200. Residues 203–230 (FVIYMFIVHFSVPLTIISFCYGRLVCTV) traverse the membrane as a helical segment. The Cytoplasmic portion of the chain corresponds to 231–252 (KEAAAQQQESETTQRAEREVTR). The helical transmembrane segment at 253–276 (MVVIMVIAFLVCWVPYASVAWYIF) threads the bilayer. Over 277–284 (THQGSTFG) the chain is Extracellular. A helical transmembrane segment spans residues 285–309 (PVFMTVPSFFAKSSAIYNPLIYICL). An N6-(retinylidene)lysine modification is found at Lys-296. The Cytoplasmic segment spans residues 310–352 (NSQFRNCMITTLFCGKNPFQEEEGASTTASKTEASSVSSVSPA). Cys-323 carries S-palmitoyl cysteine lipidation. Positions 333-352 (GASTTASKTEASSVSSVSPA) are disordered. Positions 334–352 (ASTTASKTEASSVSSVSPA) are enriched in low complexity.

This sequence belongs to the G-protein coupled receptor 1 family. Opsin subfamily. In terms of processing, phosphorylated on some or all of the serine and threonine residues present in the C-terminal region. As to expression, rod shaped photoreceptor cells which mediates vision in dim light.

The protein resides in the membrane. Functionally, visual pigments such as rhodopsin and porphyropsin are light-absorbing molecules that mediate vision. Rhodopsin consists of an apoprotein, opsin, covalently linked to 11-cis-retinal. This receptor is coupled to the activation of phospholipase C. Porphyropsin consists of opsin covalently linked to 11-cis 3,4-didehydroretinal. This Anguilla anguilla (European freshwater eel) protein is Rhodopsin, deep-sea form.